A 146-amino-acid chain; its full sequence is HTH-type transcriptional regulator FarR (146 aa).

One can recognise an HTH marR-type domain in the interval 7-139; it reads HASINIGLIQ…LKDLLAELAK (133 aa). The segment at residues 53-76 is a DNA-binding region (H-T-H motif); it reads FQDLANQACILRPSLTGILTRLEK.

With respect to regulation, repressor activity requires the presence of the Integration Host Factor (IHF), which binds to sequences located between FarR binding sites A and C. IHF binding to the promoter region stabilizes the binding of FarR to its binding sites A and C and as a consequence, enhances repression of the farAB operon. Its function is as follows. Negatively controls expression of the farAB operon by binding directly to the farAB promoter region. Binds to three sites (sites A, B and C) within the DNA sequence upstream of farA. Also represses its own expression. The sequence is that of HTH-type transcriptional regulator FarR from Neisseria gonorrhoeae.